Consider the following 188-residue polypeptide: Multiple organellar RNA editing factor 7, mitochondrial (188 aa).

A mitochondrion-targeting transit peptide spans 1–20 (MARIIRRPLNLTAAVRFRLS). The tract at residues 169 to 188 (DAKSGVVKKKHRRKRKKKLI) is disordered. A compositionally biased stretch (basic residues) spans 174–188 (VVKKKHRRKRKKKLI).

The protein belongs to the MORF family. Heterodimers with MORF8/RIP1, MORF5/RIP5 and MORF6/RIP6.

It is found in the mitochondrion. In terms of biological role, involved in organellar RNA editing. Required for the processing of few RNA editing sites in mitochondria. The protein is Multiple organellar RNA editing factor 7, mitochondrial of Arabidopsis thaliana (Mouse-ear cress).